Here is a 163-residue protein sequence, read N- to C-terminus: Nucleotide-binding protein BBR47_25280 (163 aa).

The protein belongs to the YajQ family.

Its function is as follows. Nucleotide-binding protein. The polypeptide is Nucleotide-binding protein BBR47_25280 (Brevibacillus brevis (strain 47 / JCM 6285 / NBRC 100599)).